Here is a 425-residue protein sequence, read N- to C-terminus: Glutamyl-tRNA reductase (425 aa).

Residues 49–52 (TCNR), Ser-107, 112–114 (EPQ), and Gln-118 contribute to the substrate site. Cys-50 serves as the catalytic Nucleophile. Residue 187-192 (GAGETI) coordinates NADP(+).

The protein belongs to the glutamyl-tRNA reductase family. In terms of assembly, homodimer.

The catalysed reaction is (S)-4-amino-5-oxopentanoate + tRNA(Glu) + NADP(+) = L-glutamyl-tRNA(Glu) + NADPH + H(+). The protein operates within porphyrin-containing compound metabolism; protoporphyrin-IX biosynthesis; 5-aminolevulinate from L-glutamyl-tRNA(Glu): step 1/2. In terms of biological role, catalyzes the NADPH-dependent reduction of glutamyl-tRNA(Glu) to glutamate 1-semialdehyde (GSA). This Pseudomonas putida (strain ATCC 700007 / DSM 6899 / JCM 31910 / BCRC 17059 / LMG 24140 / F1) protein is Glutamyl-tRNA reductase.